The following is an 883-amino-acid chain: AP-5 complex subunit beta-1 (883 aa).

As to quaternary structure, probably part of the adaptor protein complex 5 (AP-5).

In terms of biological role, as part of AP-5, a probable fifth adaptor protein complex, it may be involved in endosomal transport. In Xenopus tropicalis (Western clawed frog), this protein is AP-5 complex subunit beta-1 (ap5b1).